Consider the following 652-residue polypeptide: Phosphoglucomutase 1, chloroplastic (652 aa).

The N-terminal 84 residues, 1-84, are a transit peptide targeting the chloroplast; it reads MAFSAAASAS…LAARRTLRVR (84 aa). Arginine 118 and serine 211 together coordinate alpha-D-glucose 1,6-bisphosphate. The active-site Phosphoserine intermediate is the serine 211. 4 residues coordinate Mg(2+): serine 211, aspartate 376, aspartate 378, and aspartate 380. Serine 211 carries the phosphoserine modification. Positions 380, 381, 443, 462, 464, and 475 each coordinate alpha-D-glucose 1,6-bisphosphate.

The protein belongs to the phosphohexose mutase family. It depends on Mg(2+) as a cofactor.

It localises to the plastid. The protein resides in the chloroplast. It carries out the reaction alpha-D-glucose 1-phosphate = alpha-D-glucose 6-phosphate. The catalysed reaction is O-phospho-L-seryl-[protein] + alpha-D-glucose 1-phosphate = alpha-D-glucose 1,6-bisphosphate + L-seryl-[protein]. It catalyses the reaction alpha-D-glucose 1,6-bisphosphate + L-seryl-[protein] = O-phospho-L-seryl-[protein] + alpha-D-glucose 6-phosphate. With respect to regulation, inhibited by the Calvin cycle intermediates fructose-1,6-bisphosphate and ribulose-1,5-bisphosphate. Its function is as follows. Catalyzes the reversible isomerization of alpha-D-glucose 1-phosphate to alpha-D-glucose 6-phosphate. The mechanism proceeds via the intermediate compound alpha-D-glucose 1,6-bisphosphate. This enzyme participates in both the breakdown and synthesis of glucose. Required for sucrose production and accumulation necessary during plant development. Promotes gravitropic responses, negative in shoots but positive in roots, by facilitating starch granules (statoliths) formation. This chain is Phosphoglucomutase 1, chloroplastic, found in Marchantia polymorpha (Common liverwort).